Consider the following 271-residue polypeptide: Membrane protein insertase YidC 1 (271 aa).

Positions Met1–Ala20 are cleaved as a signal peptide. A lipid anchor (N-palmitoyl cysteine) is attached at Cys21. Cys21 carries the S-diacylglycerol cysteine lipid modification. Transmembrane regions (helical) follow at residues Ile45 to Ile65, Tyr124 to Leu144, Pro163 to Leu183, and Val201 to Trp221.

The protein belongs to the OXA1/ALB3/YidC family. Type 2 subfamily.

It is found in the cell membrane. Its function is as follows. Required for the insertion and/or proper folding and/or complex formation of integral membrane proteins into the membrane. Involved in integration of membrane proteins that insert both dependently and independently of the Sec translocase complex, as well as at least some lipoproteins. In Streptococcus agalactiae serotype V (strain ATCC BAA-611 / 2603 V/R), this protein is Membrane protein insertase YidC 1.